Reading from the N-terminus, the 577-residue chain is ER degradation-enhancing alpha-mannosidase-like protein 2 (577 aa).

A signal peptide spans 1-21; that stretch reads MPFRLLIPLGLVCVLLPLHHG. N-linked (GlcNAc...) asparagine glycosylation is found at Asn90, Asn112, Asn289, and Asn450. Positions 513–561 are disordered; it reads PKRAQRKTVRSGPWEPQSGPATLSSPANQPREKQPAQQRTPLLSCPSQP. Composition is skewed to polar residues over residues 531–540 and 547–561; these read GPATLSSPAN and PAQQRTPLLSCPSQP.

The protein belongs to the glycosyl hydrolase 47 family. In terms of processing, N-glycosylated.

The protein resides in the endoplasmic reticulum lumen. Its function is as follows. Involved in the endoplasmic reticulum-associated degradation (ERAD) pathway that targets misfolded glycoproteins for degradation in an N-glycan-dependent manner. May initiate ERAD by promoting the first mannose trimming step of ERAD substrates, from Man9GlcNAc2 to Man8GlcNAc2. Seems to recognize and bind to exposed hydrophobic regions in target proteins. The polypeptide is ER degradation-enhancing alpha-mannosidase-like protein 2 (Mus musculus (Mouse)).